Here is a 262-residue protein sequence, read N- to C-terminus: MSNSVRPAVKLTGIRKNFGLLEVLHGVSLTANQGEVISILGSSGSGKSTLLRCVNMLEVPNSGSVSIMGEEIALNHRSGHPSRPKYPKQVNRLRERAAMVFQSFHLWSHLTILQNVMEAPLHVQRRDRKECHAEAEALLERVGIASKRNAFPSELSGGQQQRAAIARALAMRPEVLLFDEPTSALDPELVGEVLRVMRNLAAEGRTMLIVTHEMDFARDVSSRSVFLHQGVIAEEGLSSEMFANPRTERFRQFLRRDGAASH.

The ABC transporter domain maps to 9–254 (VKLTGIRKNF…PRTERFRQFL (246 aa)). 41-48 (GSSGSGKS) contributes to the ATP binding site.

This sequence belongs to the ABC transporter superfamily.

Its subcellular location is the cell inner membrane. In terms of biological role, component of the octopine active transport system probably consisting of four subunits: Q, M, P and T. The polypeptide is Octopine permease ATP-binding protein P (occP) (Rhizobium meliloti (Ensifer meliloti)).